The following is a 124-amino-acid chain: MNFLPSTVLLLSFVVAIISGSFSSISEEWKAVCECNLSKLNNHAKTGNCKTTALWKVTSDTNCTASEYLKITVFPANDDPLNRVEQCTMTPCDQTEKTPADCNVAFSAAKLAEIAKEEKSKMII.

Positions 1-23 (MNFLPSTVLLLSFVVAIISGSFS) are cleaved as a signal peptide. Asparagine 36 and asparagine 62 each carry an N-linked (GlcNAc...) asparagine glycan.

This sequence belongs to the UPF0375 family.

The protein resides in the secreted. This is UPF0375 protein Y45F10C.4 from Caenorhabditis elegans.